Here is a 621-residue protein sequence, read N- to C-terminus: MATNPGLFTEWPWKKLGSFKYVLLAPWVAHGWYEVATKGWREVDLGYIAILPSLLLRMLHNQAWITISRLQNARGRRQIVRRGIEFDQVDRERNWDDQIILSGILLYLGALYVPGGQHLPLWRTDGAGLIALLHAGPVEFLYYWFHRALHHHFLYTHYHSHHHSSIVTEPITSVIHPFAELVAYELLFSIPLIACALTGTASIIAFEMYLIYIDFMNNMGHCNFELVPSWLFTWFPPLKYLMYTPSFHSLHHTQFRTNYSLFMPFYDYIYNTMDKSSDTLYENSLKNNEEEEAVDVVHLTHLTTLHSIYHMRPGFAEFASRPYVSRWYMRMMWPLSWLSMVLTWTYGSSFTVERNVMKKIRMQSWAIPRYSFHYGLDWEKEAINDLIEKAVCEADKNGAKVVSLGLLNQAHTLNKSGEQYLLKYPKLGARIVDGTSLAAAVVVNSIPQGTDQVILAGNVSKVARAVAQALCKKNIKVTMTNKQDYHLLKPEIPETVADNLSFSKTGTAKVWLIGDGLDSAEQFRAQKGTLFIPYSQFPPKMVRKDSCSYSTTPAMAVPKTLQNVHSCENWLPRRVMSAWRIAGILHALEGWNEHECGDKVLDMDKVWSAAIMHGFCPVAQG.

5 helical membrane-spanning segments follow: residues 99–119 (IILS…GQHL), 126–146 (GAGL…YWFH), 186–206 (LLFS…IIAF), 224–244 (FELV…LMYT), and 332–352 (MWPL…SFTV). Residues 138-272 (VEFLYYWFHR…MPFYDYIYNT (135 aa)) form the Fatty acid hydroxylase domain.

Belongs to the sterol desaturase family. Homodimer. In terms of tissue distribution, expressed in panicles, developing spikelets, stamens and hulls and, at low levels, in roots, developing seeds, flag leaves and seedling shoots. Strongly expressed in the epidermal cells of anthers.

The protein resides in the endoplasmic reticulum membrane. It carries out the reaction a long-chain fatty aldehyde + 2 NADPH + O2 + H(+) = a long-chain alkane + formate + 2 NADP(+) + H2O. Aldehyde decarbonylase involved in the conversion of aldehydes to alkanes. Core component of a very-long-chain alkane synthesis complex. Required for the biosynthesis of very-long-chain fatty acids (including polyesters) in cuticles, anther tapetum and pollen exine. The sequence is that of Very-long-chain aldehyde decarbonylase GL1-5 from Oryza sativa subsp. japonica (Rice).